A 480-amino-acid chain; its full sequence is Membrane-bound lytic murein transglycosylase F (480 aa).

The signal sequence occupies residues 1–15 (MNRILLTLLTLTLLA). A non-LT domain region spans residues 16–259 (GCQRVAVEET…HLDEKYFAHV (244 aa)). The LT domain stretch occupies residues 260 to 480 (KRFDYVDTRA…EKAITGAQPE (221 aa)). Glutamate 304 is an active-site residue.

It in the N-terminal section; belongs to the bacterial solute-binding protein 3 family. In the C-terminal section; belongs to the transglycosylase Slt family.

The protein localises to the cell outer membrane. It catalyses the reaction Exolytic cleavage of the (1-&gt;4)-beta-glycosidic linkage between N-acetylmuramic acid (MurNAc) and N-acetylglucosamine (GlcNAc) residues in peptidoglycan, from either the reducing or the non-reducing ends of the peptidoglycan chains, with concomitant formation of a 1,6-anhydrobond in the MurNAc residue.. Functionally, murein-degrading enzyme that degrades murein glycan strands and insoluble, high-molecular weight murein sacculi, with the concomitant formation of a 1,6-anhydromuramoyl product. Lytic transglycosylases (LTs) play an integral role in the metabolism of the peptidoglycan (PG) sacculus. Their lytic action creates space within the PG sacculus to allow for its expansion as well as for the insertion of various structures such as secretion systems and flagella. In Shewanella woodyi (strain ATCC 51908 / MS32), this protein is Membrane-bound lytic murein transglycosylase F.